The following is a 356-amino-acid chain: Glycerol-3-phosphate dehydrogenase [NAD(P)+] (356 aa).

Residues Trp12, Arg32, Arg33, and Lys117 each contribute to the NADPH site. Lys117, Gly151, and Ser153 together coordinate sn-glycerol 3-phosphate. Position 155 (Ala155) interacts with NADPH. Residues Lys206, Asp265, Arg276, and Asn277 each contribute to the sn-glycerol 3-phosphate site. The Proton acceptor role is filled by Lys206. Arg276 serves as a coordination point for NADPH. Residues Leu309 and Glu311 each coordinate NADPH.

It belongs to the NAD-dependent glycerol-3-phosphate dehydrogenase family.

The protein localises to the cytoplasm. The enzyme catalyses sn-glycerol 3-phosphate + NAD(+) = dihydroxyacetone phosphate + NADH + H(+). The catalysed reaction is sn-glycerol 3-phosphate + NADP(+) = dihydroxyacetone phosphate + NADPH + H(+). It participates in membrane lipid metabolism; glycerophospholipid metabolism. In terms of biological role, catalyzes the reduction of the glycolytic intermediate dihydroxyacetone phosphate (DHAP) to sn-glycerol 3-phosphate (G3P), the key precursor for phospholipid synthesis. The sequence is that of Glycerol-3-phosphate dehydrogenase [NAD(P)+] from Treponema pallidum (strain Nichols).